Here is a 273-residue protein sequence, read N- to C-terminus: Tryptophan synthase alpha chain (273 aa).

Catalysis depends on proton acceptor residues Glu-56 and Asp-67.

This sequence belongs to the TrpA family. As to quaternary structure, tetramer of two alpha and two beta chains.

It carries out the reaction (1S,2R)-1-C-(indol-3-yl)glycerol 3-phosphate + L-serine = D-glyceraldehyde 3-phosphate + L-tryptophan + H2O. It participates in amino-acid biosynthesis; L-tryptophan biosynthesis; L-tryptophan from chorismate: step 5/5. In terms of biological role, the alpha subunit is responsible for the aldol cleavage of indoleglycerol phosphate to indole and glyceraldehyde 3-phosphate. The protein is Tryptophan synthase alpha chain of Shewanella baltica (strain OS155 / ATCC BAA-1091).